The chain runs to 563 residues: Calnexin homolog (563 aa).

The signal sequence occupies residues Met1–Ala23. Over Glu24–Glu493 the chain is Lumenal. Ca(2+) is bound at residue Asp98. A disulfide bridge links Cys141 with Cys175. An alpha-D-glucoside contacts are provided by Tyr145, Lys147, Tyr166, and Asp173. A glycan (N-linked (GlcNAc...) asparagine) is linked at Asn236. Positions Glu241–Glu323 are disordered. Over residues Pro249–Asp279 the composition is skewed to basic and acidic residues. The tract at residues Ile253–Glu386 is p domain (Extended arm). A compositionally biased stretch (acidic residues) spans Asp280–Pro305. Residues Cys337 and Cys343 are joined by a disulfide bond. Residue Glu402 coordinates an alpha-D-glucoside. Asp413 is a binding site for Ca(2+). A helical membrane pass occupies residues Val494–Gly514. At Ala515–Gln563 the chain is on the cytoplasmic side. The tract at residues Ala521–Gln563 is disordered. Basic and acidic residues predominate over residues Lys526–Ser539.

It belongs to the calreticulin family.

The protein localises to the endoplasmic reticulum membrane. In terms of biological role, interacts with newly synthesized monoglucosylated glycoproteins in the endoplasmic reticulum. It may act in assisting protein assembly and/or in the retention within the ER of unassembled protein subunits. It seems to play a major role in the quality control apparatus of the ER by the retention of incorrectly folded proteins. The sequence is that of Calnexin homolog from Aspergillus fumigatus (strain ATCC MYA-4609 / CBS 101355 / FGSC A1100 / Af293) (Neosartorya fumigata).